We begin with the raw amino-acid sequence, 394 residues long: MKDYTYSVTEINEYIKDLIEGDPYLTNVSVYGEISGVRPRKGHIFFSLVEENARLECVIFGGDNMGIRLQEGRMALVEGSVSVYIPHGTYRFICSNVRYLDRVGMYQIKFETTLKKLLEEGLLSRPKKTVPRFPRKIGIITSRDSAALQDVIRTARERKAPIEIYVFHTSVQGDSAREELIKALRKANEYDLDLVMIVRGGGSKEDLWVFNEEDVIREILKLRHPVVTGIGHEIDRVIADFVADVSMHTPTGAAEYVIPDASEIHEDLDSFLEKLIASLSNRFDMEERRLETLYFRLRMIGRRKLELNEFKIERVKELAAKLRKKLMDCFEQDQEKLESLGRMLESLNPLRPLERGFVLVKKEGEIVKESSDLKRGDVVSLVFKDGTKKAQVIG.

This sequence belongs to the XseA family. Heterooligomer composed of large and small subunits.

It is found in the cytoplasm. The enzyme catalyses Exonucleolytic cleavage in either 5'- to 3'- or 3'- to 5'-direction to yield nucleoside 5'-phosphates.. In terms of biological role, bidirectionally degrades single-stranded DNA into large acid-insoluble oligonucleotides, which are then degraded further into small acid-soluble oligonucleotides. The polypeptide is Exodeoxyribonuclease 7 large subunit (Thermotoga petrophila (strain ATCC BAA-488 / DSM 13995 / JCM 10881 / RKU-1)).